Consider the following 309-residue polypeptide: Taste receptor type 2 member 8 (309 aa).

Residues 1–7 (MFSPADN) lie on the Extracellular side of the membrane. Residues 8 to 28 (IFIILITGEFILGILGNGYIA) form a helical membrane-spanning segment. The Cytoplasmic segment spans residues 29–50 (LVNWIDWIKKKKISTVDYILTN). Residues 51–71 (LVIARICLISVMVVNGIVIVL) traverse the membrane as a helical segment. Residues 72–82 (NPDVYTKNKQQ) lie on the Extracellular side of the membrane. Residues 83–103 (IVIFTFWTFANYLNMWITTCL) form a helical membrane-spanning segment. The Cytoplasmic portion of the chain corresponds to 104–131 (NVFYFLKIASSSHPLFLWLKWKIDMVVH). Residues 132–152 (WILLGCFAISLLVSLIAAIVL) form a helical membrane-spanning segment. The Extracellular portion of the chain corresponds to 153-184 (SCDYRFHAIAKHKRNITEMFHVSKIPYFEPLT). The N-linked (GlcNAc...) asparagine glycan is linked to asparagine 167. Residues 185–205 (LFNLFAIVPFIVSLISFFLLV) form a helical membrane-spanning segment. Residues 206–239 (RSLWRHTKQIKLYATGSRDPSTEVHVRAIKTMTS) are Cytoplasmic-facing. A helical transmembrane segment spans residues 240–260 (FIFFFFLYYISSILMTFSYLM). At 261-266 (TKYKLA) the chain is on the extracellular side. A helical membrane pass occupies residues 267-287 (VEFGEIAAILYPLGHSLILIV). The Cytoplasmic portion of the chain corresponds to 288–309 (LNNKLRQTFVRMLTCRKIACMI).

Belongs to the G-protein coupled receptor T2R family. In terms of tissue distribution, expressed in subsets of taste receptor cells of the tongue and palate epithelium and exclusively in gustducin-positive cells.

It localises to the membrane. Functionally, receptor that may play a role in the perception of bitterness and is gustducin-linked. May play a role in sensing the chemical composition of the gastrointestinal content. The activity of this receptor may stimulate alpha gustducin, mediate PLC-beta-2 activation and lead to the gating of TRPM5. The protein is Taste receptor type 2 member 8 (TAS2R8) of Homo sapiens (Human).